Here is a 344-residue protein sequence, read N- to C-terminus: Serpentine receptor class delta-3 (344 aa).

The next 7 helical transmembrane spans lie at 21 to 41 (IIGY…IILI), 54 to 74 (MLHL…MLAL), 102 to 122 (FLHV…MISF), 142 to 162 (ICIL…SDVA), 203 to 223 (FSAI…IVFF), 259 to 279 (IVPI…FQVV), and 287 to 307 (MPFR…LYFV).

Belongs to the nematode receptor-like protein srd family.

The protein resides in the membrane. This is Serpentine receptor class delta-3 (srd-3) from Caenorhabditis elegans.